The chain runs to 341 residues: L-threonine 3-dehydrogenase (341 aa).

Cysteine 38 serves as a coordination point for Zn(2+). Active-site charge relay system residues include threonine 40 and histidine 43. Zn(2+)-binding residues include histidine 63, glutamate 64, cysteine 93, cysteine 96, cysteine 99, and cysteine 107. Residues isoleucine 175, aspartate 195, arginine 200, 262 to 264 (LGI), and 286 to 287 (IY) each bind NAD(+).

The protein belongs to the zinc-containing alcohol dehydrogenase family. Homotetramer. It depends on Zn(2+) as a cofactor.

It is found in the cytoplasm. It carries out the reaction L-threonine + NAD(+) = (2S)-2-amino-3-oxobutanoate + NADH + H(+). The protein operates within amino-acid degradation; L-threonine degradation via oxydo-reductase pathway; glycine from L-threonine: step 1/2. Functionally, catalyzes the NAD(+)-dependent oxidation of L-threonine to 2-amino-3-ketobutyrate. The chain is L-threonine 3-dehydrogenase from Klebsiella pneumoniae (strain 342).